We begin with the raw amino-acid sequence, 264 residues long: Thymidylate synthase (264 aa).

DUMP is bound at residue arginine 21. Position 51 (histidine 51) interacts with (6R)-5,10-methylene-5,6,7,8-tetrahydrofolate. 126–127 (RR) lines the dUMP pocket. Cysteine 146 acts as the Nucleophile in catalysis. DUMP is bound by residues 166–169 (RSAD), asparagine 177, and 207–209 (HIY). Position 169 (aspartate 169) interacts with (6R)-5,10-methylene-5,6,7,8-tetrahydrofolate. Alanine 263 serves as a coordination point for (6R)-5,10-methylene-5,6,7,8-tetrahydrofolate.

This sequence belongs to the thymidylate synthase family. Bacterial-type ThyA subfamily. In terms of assembly, homodimer.

Its subcellular location is the cytoplasm. It catalyses the reaction dUMP + (6R)-5,10-methylene-5,6,7,8-tetrahydrofolate = 7,8-dihydrofolate + dTMP. The protein operates within pyrimidine metabolism; dTTP biosynthesis. Catalyzes the reductive methylation of 2'-deoxyuridine-5'-monophosphate (dUMP) to 2'-deoxythymidine-5'-monophosphate (dTMP) while utilizing 5,10-methylenetetrahydrofolate (mTHF) as the methyl donor and reductant in the reaction, yielding dihydrofolate (DHF) as a by-product. This enzymatic reaction provides an intracellular de novo source of dTMP, an essential precursor for DNA biosynthesis. The polypeptide is Thymidylate synthase (Vesicomyosocius okutanii subsp. Calyptogena okutanii (strain HA)).